A 221-amino-acid chain; its full sequence is Toxin coregulated pilus biosynthesis protein P (221 aa).

A DNA-binding region (ompR/PhoB-type) is located at residues 5–109 (RVIYQFPDNL…VKLQGYRINI (105 aa)). Residues 143 to 163 (VVPYLVFSALYVALLPVIWWS) form a helical membrane-spanning segment.

The protein localises to the cell membrane. Its function is as follows. Involved in TCP pilus biogenesis. The polypeptide is Toxin coregulated pilus biosynthesis protein P (tcpP) (Vibrio cholerae serotype O1 (strain ATCC 39315 / El Tor Inaba N16961)).